A 264-amino-acid polypeptide reads, in one-letter code: MKKLKLHGFNNLTKSLSFCIYDICYAKTTEERDGYIAYIDELYNANRLTEILSETCSIIGANILNIARQDYEPQGASVTILVSEEPVDPKLIDKTEHPGPLPETVVAHLDKSHICVHTYPESHPEGGLCTFRADIEVSTCGVISPLKALNYLIHQLESDIVTIDYRVRGFTRDINGMKHFIDHEINSIQNFMSEDMKALYDMVDVNVYQENIFHTKMLLKEFDLKHYMFHTKPEDLTDSERQEITAALWKEMREIYYGRNMPAV.

The active-site Schiff-base intermediate with substrate; via pyruvic acid is the serine 112. A Pyruvic acid (Ser); by autocatalysis modification is found at serine 112. The active-site Proton acceptor; for processing activity is the histidine 117. Catalysis depends on cysteine 140, which acts as the Proton donor; for catalytic activity.

This sequence belongs to the prokaryotic AdoMetDC family. Type 2 subfamily. Heterooctamer of four alpha and four beta chains arranged as a tetramer of alpha/beta heterodimers. Requires pyruvate as cofactor. In terms of processing, is synthesized initially as an inactive proenzyme. Formation of the active enzyme involves a self-maturation process in which the active site pyruvoyl group is generated from an internal serine residue via an autocatalytic post-translational modification. Two non-identical subunits are generated from the proenzyme in this reaction, and the pyruvate is formed at the N-terminus of the alpha chain, which is derived from the carboxyl end of the proenzyme. The post-translation cleavage follows an unusual pathway, termed non-hydrolytic serinolysis, in which the side chain hydroxyl group of the serine supplies its oxygen atom to form the C-terminus of the beta chain, while the remainder of the serine residue undergoes an oxidative deamination to produce ammonia and the pyruvoyl group blocking the N-terminus of the alpha chain.

It catalyses the reaction S-adenosyl-L-methionine + H(+) = S-adenosyl 3-(methylsulfanyl)propylamine + CO2. It functions in the pathway amine and polyamine biosynthesis; S-adenosylmethioninamine biosynthesis; S-adenosylmethioninamine from S-adenosyl-L-methionine: step 1/1. Catalyzes the decarboxylation of S-adenosylmethionine to S-adenosylmethioninamine (dcAdoMet), the propylamine donor required for the synthesis of the polyamines spermine and spermidine from the diamine putrescine. This is S-adenosylmethionine decarboxylase proenzyme from Escherichia coli O45:K1 (strain S88 / ExPEC).